The chain runs to 169 residues: Cell division inhibitor SulA (169 aa).

Residues 106-112 (ALRTGNY) form a ftsZ binding region. The segment at 162-169 (KIHSNLYH) is lon protease binding.

The protein belongs to the SulA family. In terms of assembly, interacts with FtsZ. Is rapidly cleaved and degraded by the Lon protease once DNA damage is repaired.

Its function is as follows. Component of the SOS system and an inhibitor of cell division. Accumulation of SulA causes rapid cessation of cell division and the appearance of long, non-septate filaments. In the presence of GTP, binds a polymerization-competent form of FtsZ in a 1:1 ratio, thus inhibiting FtsZ polymerization and therefore preventing it from participating in the assembly of the Z ring. This mechanism prevents the premature segregation of damaged DNA to daughter cells during cell division. This chain is Cell division inhibitor SulA, found in Salmonella gallinarum (strain 287/91 / NCTC 13346).